The chain runs to 257 residues: Imidazole glycerol phosphate synthase subunit HisF (257 aa).

Catalysis depends on residues D12 and D131.

This sequence belongs to the HisA/HisF family. Heterodimer of HisH and HisF.

Its subcellular location is the cytoplasm. The catalysed reaction is 5-[(5-phospho-1-deoxy-D-ribulos-1-ylimino)methylamino]-1-(5-phospho-beta-D-ribosyl)imidazole-4-carboxamide + L-glutamine = D-erythro-1-(imidazol-4-yl)glycerol 3-phosphate + 5-amino-1-(5-phospho-beta-D-ribosyl)imidazole-4-carboxamide + L-glutamate + H(+). It participates in amino-acid biosynthesis; L-histidine biosynthesis; L-histidine from 5-phospho-alpha-D-ribose 1-diphosphate: step 5/9. IGPS catalyzes the conversion of PRFAR and glutamine to IGP, AICAR and glutamate. The HisF subunit catalyzes the cyclization activity that produces IGP and AICAR from PRFAR using the ammonia provided by the HisH subunit. The protein is Imidazole glycerol phosphate synthase subunit HisF of Paraburkholderia phytofirmans (strain DSM 17436 / LMG 22146 / PsJN) (Burkholderia phytofirmans).